The following is a 154-amino-acid chain: Large ribosomal subunit protein uL11 (154 aa).

It belongs to the universal ribosomal protein uL11 family. Part of the ribosomal stalk of the 50S ribosomal subunit. Interacts with L10 and the large rRNA to form the base of the stalk. L10 forms an elongated spine to which L12 dimers bind in a sequential fashion forming a multimeric L10(L12)X complex. In terms of processing, one or more lysine residues are methylated.

In terms of biological role, forms part of the ribosomal stalk which helps the ribosome interact with GTP-bound translation factors. This Leuconostoc mesenteroides subsp. mesenteroides (strain ATCC 8293 / DSM 20343 / BCRC 11652 / CCM 1803 / JCM 6124 / NCDO 523 / NBRC 100496 / NCIMB 8023 / NCTC 12954 / NRRL B-1118 / 37Y) protein is Large ribosomal subunit protein uL11.